The sequence spans 354 residues: Protein Wnt-11 (354 aa).

An N-terminal signal peptide occupies residues 1-23 (MTEYRNFLLLFITSLSVIYPCTG). Asparagine 32, asparagine 39, and asparagine 89 each carry an N-linked (GlcNAc...) asparagine glycan. Intrachain disulfides connect cysteine 129–cysteine 137, cysteine 139–cysteine 156, cysteine 209–cysteine 223, cysteine 211–cysteine 218, cysteine 283–cysteine 314, cysteine 299–cysteine 309, cysteine 329–cysteine 344, cysteine 331–cysteine 341, and cysteine 336–cysteine 337. Residue serine 215 is the site of O-palmitoleoyl serine; by PORCN attachment. Residue asparagine 300 is glycosylated (N-linked (GlcNAc...) asparagine).

The protein belongs to the Wnt family. Palmitoleoylation is required for efficient binding to frizzled receptors. Depalmitoleoylation leads to Wnt signaling pathway inhibition.

It is found in the secreted. It localises to the extracellular space. The protein resides in the extracellular matrix. Ligand for fzd5, a member of the G-protein coupled frizzled receptor family. Plays a role in early eye development, possibly through wnt non-canonical signaling. Promotes eye formation, at least partially, by antagonizing the Wnt/beta-catenin pathway. In addition, promotes coherence of eye field cells, potentially contributing to the coordinated morphogenetic behaviors of cells in the nascent eye field. In Danio rerio (Zebrafish), this protein is Protein Wnt-11 (wnt11).